A 444-amino-acid chain; its full sequence is Zinc finger CCCH domain-containing protein 63 (444 aa).

3 C3H1-type zinc fingers span residues 56-84 (RIGEPDCSYYMRTGLCRFGMTCKFNHPAD), 101-129 (RIGQPECQYYLKTGTCKFGATCKFHHPRE), and 147-175 (RPNEKECAYYLRTGQCKFGSTCKFHHPQP). The tract at residues 251-276 (GSSSSDDQQRTAGGAQYYTGSRHSET) is disordered. 2 consecutive C3H1-type zinc fingers follow at residues 309 to 337 (RPDQPECQFYMKTGDCKFGAVCKFHHPKE) and 355 to 383 (RPGEPICTFYSRYGICKFGPNCKFDHPMG). Positions 405–444 (PVPAHSEVSPDNVSGRSRRITHSDSQQIPSGERGTEREAS) are disordered.

The protein is Zinc finger CCCH domain-containing protein 63 of Oryza sativa subsp. japonica (Rice).